The primary structure comprises 238 residues: Survival of motor neuron-related-splicing factor 30 (238 aa).

Positions 72 to 132 (SWKVGEKCMA…RPVEEGRKAK (61 aa)) constitute a Tudor domain. Positions 142–160 (KKEMIAAQREYKKKKALKK) match the Nuclear localization signal motif.

It belongs to the SMN family. In terms of assembly, associates with spliceosomes.

Its subcellular location is the nucleus speckle. The protein localises to the nucleus. The protein resides in the cajal body. In terms of biological role, involved in spliceosome assembly. This chain is Survival of motor neuron-related-splicing factor 30 (smndc1), found in Xenopus tropicalis (Western clawed frog).